The primary structure comprises 505 residues: ATP synthase subunit alpha (505 aa).

170–177 serves as a coordination point for ATP; the sequence is GDRQTGKT.

Belongs to the ATPase alpha/beta chains family. F-type ATPases have 2 components, CF(1) - the catalytic core - and CF(0) - the membrane proton channel. CF(1) has five subunits: alpha(3), beta(3), gamma(1), delta(1), epsilon(1). CF(0) has four main subunits: a(1), b(1), b'(1) and c(9-12).

The protein resides in the cellular thylakoid membrane. It carries out the reaction ATP + H2O + 4 H(+)(in) = ADP + phosphate + 5 H(+)(out). In terms of biological role, produces ATP from ADP in the presence of a proton gradient across the membrane. The alpha chain is a regulatory subunit. The protein is ATP synthase subunit alpha of Prochlorococcus marinus (strain MIT 9515).